The primary structure comprises 262 residues: Taurine import ATP-binding protein TauB (262 aa).

The region spanning 4–233 (LELERISAQY…RYAAGESARA (230 aa)) is the ABC transporter domain. Residue 38-45 (GPSGSGKT) coordinates ATP.

It belongs to the ABC transporter superfamily. Taurine importer (TC 3.A.1.17.1) family. In terms of assembly, the complex is composed of two ATP-binding proteins (TauB), two transmembrane proteins (TauC) and a solute-binding protein (TauA).

The protein localises to the cell inner membrane. It catalyses the reaction taurine(out) + ATP + H2O = taurine(in) + ADP + phosphate + H(+). In terms of biological role, part of the ABC transporter complex TauABC involved in taurine import. Responsible for energy coupling to the transport system. The protein is Taurine import ATP-binding protein TauB of Pseudomonas putida (strain ATCC 47054 / DSM 6125 / CFBP 8728 / NCIMB 11950 / KT2440).